Here is a 578-residue protein sequence, read N- to C-terminus: Transmembrane protein 121B (578 aa).

2 disordered regions span residues 1–84 (MRPA…ESLS) and 106–129 (AGPAPVAFSSSAATSSSTSTPTSS). 2 stretches are compositionally biased toward low complexity: residues 8-17 (PRSVSSASGS) and 44-53 (GDSSTSTSTS). Gly residues predominate over residues 54-67 (RGGGGGRRGGGGGS). Ser-167 is subject to Phosphoserine. Residues 529-557 (RARGGYGAPPSAPPPPPPPPQGGSQLGHC) form a disordered region. A compositionally biased stretch (pro residues) spans 538-549 (PSAPPPPPPPPQ). Ser-552 carries the post-translational modification Phosphoserine.

The protein belongs to the TMEM121 family. As to expression, widely expressed, especially in adult heart, brain, prostate, testes, peripherical blood leukocytes and fetal brain.

This Homo sapiens (Human) protein is Transmembrane protein 121B.